The following is a 285-amino-acid chain: Aquaporin PIP2-5 (285 aa).

Helical transmembrane passes span 38-58 (AVIA…ATVI) and 75-95 (CGGV…FILV). An NPA 1 motif is present at residues 107 to 109 (NPA). 3 helical membrane-spanning segments follow: residues 126-146 (LLYI…VKGF), 168-188 (GTGL…VFSA), and 202-222 (VLAP…TIPI). Positions 228 to 230 (NPA) match the NPA 2 motif. Residues 250–270 (IFWVGPFIGAAIAAAYHQYVL) traverse the membrane as a helical segment.

This sequence belongs to the MIP/aquaporin (TC 1.A.8) family. PIP (TC 1.A.8.11) subfamily. As to quaternary structure, homomers. May interact with PIP1-2 to form heteromers. In terms of tissue distribution, specifically expressed in roots, in the exodermis, endodermis and xylem parenchyma. Polar localization to the external periclinal side of epidermal cells in root apices.

Its subcellular location is the cell membrane. Water channel required to facilitate the transport of water across cell membrane. Its function is impaired by Hg(2+). May play a role in water uptake from the root surface. Active as homomers. Increased activity when heteromerization with PIP1-2. The sequence is that of Aquaporin PIP2-5 (PIP2-5) from Zea mays (Maize).